The sequence spans 296 residues: Probable GTP 3',8-cyclase (296 aa).

Residues 5-230 (EYGRVVTNLR…HRRTQYFTPK (226 aa)) enclose the Radical SAM core domain. Residue R14 coordinates GTP. 2 residues coordinate [4Fe-4S] cluster: C21 and C25. Y27 contacts S-adenosyl-L-methionine. C28 provides a ligand contact to [4Fe-4S] cluster. GTP is bound at residue K61. G65 is a binding site for S-adenosyl-L-methionine. T89 contributes to the GTP binding site. An S-adenosyl-L-methionine-binding site is contributed by S113. Position 150 (K150) interacts with GTP. C245 and C248 together coordinate [4Fe-4S] cluster. GTP is bound at residue 250–252 (RMR). Position 262 (C262) interacts with [4Fe-4S] cluster.

Belongs to the radical SAM superfamily. MoaA family. It depends on [4Fe-4S] cluster as a cofactor.

It catalyses the reaction GTP + AH2 + S-adenosyl-L-methionine = (8S)-3',8-cyclo-7,8-dihydroguanosine 5'-triphosphate + 5'-deoxyadenosine + L-methionine + A + H(+). It functions in the pathway cofactor biosynthesis; molybdopterin biosynthesis. Its function is as follows. Catalyzes the cyclization of GTP to (8S)-3',8-cyclo-7,8-dihydroguanosine 5'-triphosphate. This Archaeoglobus fulgidus (strain ATCC 49558 / DSM 4304 / JCM 9628 / NBRC 100126 / VC-16) protein is Probable GTP 3',8-cyclase.